The chain runs to 481 residues: GDP-fucose protein O-fucosyltransferase 3 (481 aa).

Topologically, residues 1–8 (MVRFQRRK) are cytoplasmic. Residues 9-31 (LLASCLCVTATVFLMVTLQVVVE) form a helical; Signal-anchor for type II membrane protein membrane-spanning segment. The Lumenal portion of the chain corresponds to 32–481 (LGKFERKKLK…EEFWALVFKD (450 aa)). N-linked (GlcNAc...) asparagine glycosylation is found at Asn-110, Asn-168, and Asn-318. An intrachain disulfide couples Cys-389 to Cys-392. An N-linked (GlcNAc...) asparagine glycan is attached at Asn-468.

It belongs to the glycosyltransferase 10 family. In terms of tissue distribution, widely expressed, with a higher expression in liver and thymus.

The protein resides in the endoplasmic reticulum membrane. It carries out the reaction L-threonyl-[protein] + GDP-beta-L-fucose = 3-O-(alpha-L-fucosyl)-L-threonyl-[protein] + GDP + H(+). It catalyses the reaction L-seryl-[protein] + GDP-beta-L-fucose = 3-O-(alpha-L-fucosyl)-L-seryl-[protein] + GDP + H(+). It functions in the pathway protein modification; protein glycosylation. Its function is as follows. Protein O-fucosyltransferase that specifically catalyzes O-fucosylation of serine or threonine residues in EMI domains of target proteins, such as MMRN1, MMRN2 and EMID1. Attaches fucose through an O-glycosidic linkage. O-fucosylation of EMI domain-containing proteins may be required for facilitating protein folding and secretion. May also show alpha-(1,3)-fucosyltransferase activity toward the innermost N-acetyl glucosamine (GlcNAc) residue in biantennary N-glycan acceptors. However, this was tested with a library of synthetic substrates and this activity is unsure in vivo. May be involved in biosynthesis of Lewis X-carrying biantennary N-glycans that regulate neuron stem cell self-renewal during brain development. The protein is GDP-fucose protein O-fucosyltransferase 3 of Mus musculus (Mouse).